Reading from the N-terminus, the 2290-residue chain is Autophagy-related protein 2 (2290 aa).

A Chorein N-terminal domain is found at 10–99; that stretch reads WCKVMLQRYM…MCIEDLQLTF (90 aa). Positions 829-1549 are required for epg-6 binding; it reads DSMMKSVSAD…PNRDHSAFVV (721 aa). 4 disordered regions span residues 1678–1727, 1805–1851, 1898–1919, and 1967–2003; these read IGSK…LGDL, DDLF…DLTG, SETE…PARN, and EHGN…ERNK. The span at 1681–1692 shows a compositional bias: low complexity; sequence KKTTPKTSVSSS. A compositionally biased stretch (pro residues) spans 1714–1723; sequence RPSPVQPPTP. Low complexity predominate over residues 1810–1830; that stretch reads QSYSSSSSETESESSAPQSSQ. Residues 1972–2011 are a coiled coil; the sequence is LDSIDNEDDNEKQKIEEEMEEDEKEEEEERNKEIQEAVER. Positions 1988–1999 are enriched in acidic residues; the sequence is EEMEEDEKEEEE.

This sequence belongs to the ATG2 family. As to quaternary structure, interacts with epg-6; the interaction is direct.

The protein localises to the preautophagosomal structure membrane. The protein resides in the lipid droplet. It localises to the endoplasmic reticulum membrane. Its subcellular location is the cytoplasm. It catalyses the reaction a 1,2-diacyl-sn-glycero-3-phospho-L-serine(in) = a 1,2-diacyl-sn-glycero-3-phospho-L-serine(out). It carries out the reaction a 1,2-diacyl-sn-glycero-3-phosphoethanolamine(in) = a 1,2-diacyl-sn-glycero-3-phosphoethanolamine(out). In terms of biological role, lipid transfer protein involved in autophagosome assembly and in the distribution of atg-9 and atg-13 during the autophagy-mediated degradation of protein aggregates. Tethers the edge of the isolation membrane (IM) to the endoplasmic reticulum (ER) and mediates direct lipid transfer from ER to IM for IM expansion. Binds to the ER exit site (ERES), which is the membrane source for autophagosome formation, and extracts phospholipids from the membrane source to the IM for membrane expansion. Involved in autophagy-mediated degradation of ribosomal RNA and ribosomal proteins in lysosomes, which is essential for maintaining nucleotide homeostasis. In Caenorhabditis elegans, this protein is Autophagy-related protein 2.